A 350-amino-acid polypeptide reads, in one-letter code: Trans-enoyl reductase iliB (350 aa).

50 to 53 is an NADP(+) binding site; the sequence is VDGK. Residue 145–152 participates in substrate binding; sequence AAIATVGL. Residues 177-180, Tyr195, and 242-243 contribute to the NADP(+) site; these read SAAS and LD. Position 262–266 (262–266) interacts with substrate; the sequence is TPTQF. 331–332 contributes to the NADP(+) binding site; sequence IK.

Belongs to the zinc-containing alcohol dehydrogenase family. As to quaternary structure, monomer.

The catalysed reaction is N-[(4E,6E,10S,12Z,14E)-6,10-dimethyl-3-oxohexadeca-4,6,12,14-tetraenoyl]-L-tyrosyl-[ACP] = (3E,5S)-3-[(2E,4E,8S,10E,12Z)-1-hydroxy-4,8-dimethyltetradeca-2,4,10,12-tetraen-1-ylidene]-5-[(4-hydroxyphenyl)methyl]pyrrolidine-2,4-dione + holo-[ACP] + H(+). It participates in mycotoxin biosynthesis. Its function is as follows. Trans-enoyl reductase; part of the gene cluster that mediates the biosynthesis of ilicicolin H, a 4-hydroxy-2-pyridonealkaloid that has potent and broad antifungal activities by inhibiting the mitochondrial respiration chain. IliB collaborates with the hybrid PKS-NRPS synthetase iliA to assemble the backbone of ilicicolin H. The PKS portion of iliA and trans-acting enoyl reductase iliB work together to construct an octaketide, and two methyl groups are introduced by the MT domain of iliA during the chain assembly. The nascent chain is then condensed with tyrosine, catalyzed by the iliA C domain, and the resulting PKS-NRPS hybrid is offloaded by the iliA RED domain to form an advanced tetramic acid intermediate. The biosynthesis of ilicicolin H starts with formation of the tetramic acid by the hybrid PKS-NRPS synthetase iliA with the partnering trans-enoyl reductase iliB since iliA lacks a designated enoylreductase (ER) domain. The cytochrome P450 monooxygenase iliC then catalyzes the ring expansion of the tetramate to the acyclic 2-pyridone. The pericyclase iliD further converts the acyclic 2-pyridone into 8-epi-ilicicolin H. 8-epi-ilicicolin H might then spontaneously convert to ilicicolin H since ilicicolin H is produced in the absence of the epimerase iliE, in contrast to what was observed for the Talaromyces variabilis ilicolin H biosynthetic pathway. The sequence is that of Trans-enoyl reductase iliB from Hypocrea jecorina (strain QM6a) (Trichoderma reesei).